We begin with the raw amino-acid sequence, 493 residues long: MQPQRDLRGLWLLLLSLFLLLFEVARAGRPVVSCPANCLCASNILSCSKQQLPNVPQSLPGYTALLDLSHNNLSRLKAEWTPTRLTNLHSLLLSHNHLNFISSEAFVPVPNLRYLDLSSNHLHTLDEFLFSGLQALEVLLLYNNHIVVVDRNAFEDMAQLQKLYLSQNMISRFPLELIKDANRLPKLTLLDLSSNKLKKLPLTDLQKLPAWVKNGLYLHNNPLECDCKLYQLFSHWQYRQLSSVMDFQEDLYCVHSKKLHNVFSLDFFNCSEYKESAWEAHLGDTLTITCDTKQQGMTKVWVTPSNEQVLNQGANGTVTVSEDGNLHFKEVQVEDGGVYTCYAMGETFNETLSVELKVYNFTLHGHHDTLNTAYTTLVGCILSVVLVLIYLYLTPCRCWCRGVEKPSSHQGDSLSSSMLSTTPNHDPMAGGDKDDGFDRRVAFLEPAGPGQGQNGKLKPGNTLPVPEATGKGQRRMSDPESVSSVFSDTPIVV.

Positions 1–27 are cleaved as a signal peptide; sequence MQPQRDLRGLWLLLLSLFLLLFEVARA. The LRRNT domain maps to 28–61; sequence GRPVVSCPANCLCASNILSCSKQQLPNVPQSLPG. Topologically, residues 28-372 are extracellular; the sequence is GRPVVSCPAN…LHGHHDTLNT (345 aa). Disulfide bonds link cysteine 34-cysteine 40 and cysteine 38-cysteine 47. LRR repeat units lie at residues 62–83, 87–108, 111–132, 135–156, 159–179, and 186–206; these read YTALLDLSHNNLSRLKAEWTPT, NLHSLLLSHNHLNFISSEAFVP, NLRYLDLSSNHLHTLDEFLFSG, ALEVLLLYNNHIVVVDRNAFED, QLQKLYLSQNMISRFPLELIK, and KLTLLDLSSNKLKKLPLTDLQ. N-linked (GlcNAc...) asparagine glycosylation occurs at asparagine 72. In terms of domain architecture, LRRCT spans 221 to 272; sequence NPLECDCKLYQLFSHWQYRQLSSVMDFQEDLYCVHSKKLHNVFSLDFFNCSE. 3 disulfide bridges follow: cysteine 225-cysteine 253, cysteine 227-cysteine 270, and cysteine 290-cysteine 341. Asparagine 269, asparagine 315, asparagine 349, and asparagine 360 each carry an N-linked (GlcNAc...) asparagine glycan. One can recognise an Ig-like C2-type domain in the interval 269-353; the sequence is NCSEYKESAW…MGETFNETLS (85 aa). The helical transmembrane segment at 373 to 393 threads the bilayer; the sequence is AYTTLVGCILSVVLVLIYLYL. Residues 394 to 493 lie on the Cytoplasmic side of the membrane; it reads TPCRCWCRGV…SVFSDTPIVV (100 aa). The interval 405 to 493 is disordered; that stretch reads KPSSHQGDSL…SVFSDTPIVV (89 aa). Polar residues predominate over residues 408–424; sequence SHQGDSLSSSMLSTTPN. Positions 431 to 442 are enriched in basic and acidic residues; it reads GDKDDGFDRRVA. Phosphoserine is present on residues serine 477 and serine 481.

Belongs to the immunoglobulin superfamily. AMIGO family. As to quaternary structure, homodimer, and heterodimer with AMIGO2 and AMIGO3. Interacts with KCNB1.

Its subcellular location is the cell membrane. The protein resides in the perikaryon. The protein localises to the cell projection. It localises to the dendrite. It is found in the axon. In terms of biological role, promotes growth and fasciculation of neurites from cultured hippocampal neurons. May be involved in fasciculation as well as myelination of developing neural axons. May have a role in regeneration as well as neural plasticity in the adult nervous system. May mediate homophilic as well as heterophilic cell-cell interaction and contribute to signal transduction through its intracellular domain. Assembled with KCNB1 modulates the gating characteristics of the delayed rectifier voltage-dependent potassium channel KCNB1. This is Amphoterin-induced protein 1 from Rattus norvegicus (Rat).